Here is a 122-residue protein sequence, read N- to C-terminus: Large ribosomal subunit protein uL14 (122 aa).

It belongs to the universal ribosomal protein uL14 family. Part of the 50S ribosomal subunit. Forms a cluster with proteins L3 and L19. In the 70S ribosome, L14 and L19 interact and together make contacts with the 16S rRNA in bridges B5 and B8.

Functionally, binds to 23S rRNA. Forms part of two intersubunit bridges in the 70S ribosome. This Erythrobacter litoralis (strain HTCC2594) protein is Large ribosomal subunit protein uL14.